Consider the following 639-residue polypeptide: Probable potassium transport system protein Kup 1 (639 aa).

The next 12 helical transmembrane spans lie at 27–47 (AILGSIGVVYGDIGTSPLYAF), 64–84 (VIGLTSLMIWSLTIIVTFKYI), 115–135 (VLIVLGLIGAALFLGDAMITP), 151–171 (PAMDDFIIPISVCILIGLFAI), 182–202 (FFGPITAVWFLVMGGAGLIHI), 225–245 (GFYGVVVLGAVFLTITGAEAL), 261–281 (WFCLVFPALTLNYLGQGALVL), 293–313 (LMFPQWAILPAVILATAATII), 351–371 (IYLPAVNTILLFGVVALVLTF), 377–397 (LATAYGISVTGAMVVTSLMFF), 408–428 (IWLALAVLTPLLLLELIFLGA), and 430–450 (LLKIHDGGYVPVLLAIAFTVI).

It belongs to the HAK/KUP transporter (TC 2.A.72) family.

It localises to the cell inner membrane. It carries out the reaction K(+)(in) + H(+)(in) = K(+)(out) + H(+)(out). Functionally, transport of potassium into the cell. Likely operates as a K(+):H(+) symporter. This Agrobacterium fabrum (strain C58 / ATCC 33970) (Agrobacterium tumefaciens (strain C58)) protein is Probable potassium transport system protein Kup 1.